Consider the following 377-residue polypeptide: Nitric oxide reductase FlRd-NAD(+) reductase (377 aa).

It belongs to the FAD-dependent oxidoreductase family. FAD is required as a cofactor.

It localises to the cytoplasm. The catalysed reaction is 2 reduced [nitric oxide reductase rubredoxin domain] + NAD(+) + H(+) = 2 oxidized [nitric oxide reductase rubredoxin domain] + NADH. Its pathway is nitrogen metabolism; nitric oxide reduction. In terms of biological role, one of at least two accessory proteins for anaerobic nitric oxide (NO) reductase. Reduces the rubredoxin moiety of NO reductase. This chain is Nitric oxide reductase FlRd-NAD(+) reductase, found in Escherichia coli O9:H4 (strain HS).